The primary structure comprises 162 residues: Caveolin-2 (162 aa).

Topologically, residues 1–86 are cytoplasmic; that stretch reads MGLESEKADV…FEISKYVLYK (86 aa). Y19 carries the phosphotyrosine modification. A phosphoserine mark is found at S20, S23, and S36. An intramembrane region (helical) is located at residues 87 to 107; it reads FLTFFLAIPLAFAAGILFAIL. Residues 108–162 are Cytoplasmic-facing; that stretch reads SCLHIWIIMPFVKTCLMVLPSVQTIWKSVTDVVIAPLCTSVGRSFSSVSLQLSQD.

The protein belongs to the caveolin family. Monomer or homodimer. Interacts with CAV1; the interaction forms a stable heterooligomeric complex that is required for targeting to lipid rafts and for caveolae formation. Tyrosine phosphorylated forms do not form heterooligomers with the Tyr-19-phosphorylated form existing as a monomer or dimer. Interacts (tyrosine phosphorylated form) with the SH2 domain-containing proteins, RASA1, NCK1 and SRC. Interacts (tyrosine phosphorylated form) with INSR. Interacts (Tyr-19 phosphorylated form) with MAPK1 (phosphorylated form); the interaction, promoted by insulin, leads to nuclear location and MAPK1 activation. Interacts with STAT3; the interaction is increased on insulin-induced tyrosine phosphorylation leading to STAT activation. Phosphorylated on serine and tyrosine residues. CAV1 promotes phosphorylation on Ser-23 which then targets the complex to the plasma membrane, lipid rafts and caveolae. Phosphorylation on Ser-36 appears to modulate mitosis in endothelial cells. Phosphorylation on Tyr-19 is required for insulin-induced phosphorylation of MAPK1 and DNA binding of STAT3. Tyrosine phosphorylation is induced by both EGF and insulin.

The protein resides in the nucleus. The protein localises to the golgi apparatus membrane. It is found in the cell membrane. It localises to the membrane. Its subcellular location is the caveola. May act as a scaffolding protein within caveolar membranes. Interacts directly with G-protein alpha subunits and can functionally regulate their activity. Acts as an accessory protein in conjunction with CAV1 in targeting to lipid rafts and driving caveolae formation. The Ser-36 phosphorylated form has a role in modulating mitosis in endothelial cells. Positive regulator of cellular mitogenesis of the MAPK signaling pathway. Required for the insulin-stimulated nuclear translocation and activation of MAPK1 and STAT3, and the subsequent regulation of cell cycle progression. This is Caveolin-2 (CAV2) from Echinops telfairi (Lesser hedgehog tenrec).